The sequence spans 237 residues: B3 domain-containing protein Os06g0194400 (237 aa).

Disordered stretches follow at residues 1–23 and 38–82; these read MIEA…RQVE and SAAV…LPEK. A DNA-binding region (TF-B3) is located at residues 139 to 230; sequence FVKPMLQSHV…KFKVYIIRAS (92 aa).

The protein localises to the nucleus. This Oryza sativa subsp. japonica (Rice) protein is B3 domain-containing protein Os06g0194400.